A 473-amino-acid polypeptide reads, in one-letter code: MSFTVAIVGRPNVGKSTLFNRLVGKKLALVDDTPGVTRDRRPGDARLMGLTFTIIDTAGLEEADEESLQGRMRAQTEAAIDEADLSLFVVDAKNGLTPVDTALAEMLRRRGKPVVLVANKSEARGSDSGFYDAYTLGLGEPTPISAEHGEGMLDLRDAIVEAIGKDRAYAKEDVAVTNVDISEAAGEGEDEDEEPLYDDTKPLRVAIVGRPNAGKSTLINRFLGEDRLLTGPEAGITRDSISVEWDWRGRTIKMFDTAGMRRKARVTEKLEKLSVADALRAIRFAETVVIVFDATIPFEKQDLQIVDLVLREGRAAVLAFNKWDMIEDRQAVLADLREKTDRLLPQARGIRAVPISGQTGWGLDKLMQSIIDTDRVWNKRISTAKLNRWLETQQIQHPPPAVSGRRIKLKYMTQVKARPPAFMISCTRSDALPESYTRYLINGLRADFDMPSVPIRIHFRSAENPFEGKKRRT.

EngA-type G domains follow at residues 3–167 and 203–378; these read FTVA…GKDR and LRVA…RVWN. Residues 9–16, 56–60, 119–122, 209–216, 256–260, and 321–324 each bind GTP; these read GRPNVGKS, DTAGL, NKSE, GRPNAGKS, DTAGM, and NKWD. The KH-like domain occupies 379-463; it reads KRISTAKLNR…PIRIHFRSAE (85 aa).

This sequence belongs to the TRAFAC class TrmE-Era-EngA-EngB-Septin-like GTPase superfamily. EngA (Der) GTPase family. As to quaternary structure, associates with the 50S ribosomal subunit.

Functionally, GTPase that plays an essential role in the late steps of ribosome biogenesis. This chain is GTPase Der, found in Rhizobium leguminosarum bv. trifolii (strain WSM2304).